A 750-amino-acid polypeptide reads, in one-letter code: Nibrin (750 aa).

In terms of domain architecture, FHA spans Tyr-24 to Met-83. BRCT domains are found at residues Lys-105–Leu-181 and Gly-224–Ile-315. The segment at Glu-111–Gln-328 is mediates interaction with SP100. The interaction with MTOR, MAPKAP1 and RICTOR stretch occupies residues Ile-221–Asn-403. Thr-337 carries the post-translational modification Phosphothreonine. At Ser-343 the chain carries Phosphoserine; by ATM. Phosphoserine occurs at positions 347 and 433. Disordered regions lie at residues Asn-429–Lys-479 and Gln-494–Lys-550. Lys-436 participates in a covalent cross-link: Glycyl lysine isopeptide (Lys-Gly) (interchain with G-Cter in ubiquitin). Polar residues predominate over residues Trp-446–Asn-457. The Nuclear localization signal signature appears at Pro-461–Glu-467. A compositionally biased stretch (basic and acidic residues) spans Lys-502–Asp-514. Phosphoserine is present on residues Ser-508 and Ser-517. Lys-528 participates in a covalent cross-link: Glycyl lysine isopeptide (Lys-Gly) (interchain with G-Cter in SUMO2). The segment covering Ser-540–Lys-550 has biased composition (basic and acidic residues). Residues Lys-569 and Lys-580 each participate in a glycyl lysine isopeptide (Lys-Gly) (interchain with G-Cter in SUMO2) cross-link. Positions Gln-581 to Gln-599 are enriched in basic and acidic residues. Positions Gln-581–Asp-622 are disordered. Residues Lys-683, Lys-687, and Lys-732 each participate in a glycyl lysine isopeptide (Lys-Gly) (interchain with G-Cter in ubiquitin) cross-link. The FxF/Y motif motif lies at Ala-737 to Asn-746.

Belongs to the Nibrin family. As to quaternary structure, component of the MRN complex composed of two heterodimers RAD50 and MRE11 associated with a single NBN. The MRN complexes dimerize on DNA to form joined MRN-MRN oligomers required for DNA double-strand break repair. The MRN complexes dimerize on DNA to form joined MRN-MRN oligomers required for DNA double-strand break repair. As part of the MRN complex, interacts with MCM9; the interaction recruits the complex to DNA repair sites. Component of the BASC complex, at least composed of BRCA1, MSH2, MSH6, MLH1, ATM, BLM, RAD50, MRE11 and NBN. Interacts with histone H2AX; this requires phosphorylation of H2AX on 'Ser-139' and promotes NBN recruitment to DNA damage sites. Interacts with (phosphorylated) MDC1; promoting NBN recruitment to DNA damage sites. Interacts with (phosphorylated) RAD17; promoting NBN recruitment to DNA damage sites. Interacts (via FxF/Y motif) with ATM. Interacts with HJURP. Interacts with INTS3. Interacts with KPNA2. Interacts with TERF2; interaction is disrupted upon NBN phosphorylation by CDK2. Interacts with (phosphorylated) RBBP8/CtIP; the interaction links the role of the MRN complex in DNA double-strand break sensing to resection. Interacts with SP100; recruits NBN to PML bodies. Interacts with ATF2. Interacts with MTOR, MAPKAP1 isoform 2 and RICTOR; indicative for an association with the mTORC2 complex. Interacts with MRNIP. Interacts with UFL1; promoting UFL1 recruitment to double-strand breaks following DNA damage. Interacts with CYREN (via XLF motif). Phosphorylated by ATM in response of ionizing radiation, and such phosphorylation is responsible intra-S phase checkpoint control and telomere maintenance. Phosphorylated at Ser-433 by CDK2 in S/G2 phases abolishes interaction with TERF2, enabling DCLRE1B/Apollo recruitment to telomeres. Phosphorylation at Ser-433 in response to dysfunctional telomeres promotes non-homologous end joining repair at telomeres, while dephosphorylation by PPP1CA promotes microhomology-mediated end-joining (MMEJ) repair. In terms of processing, ubiquitinated at Lys-436 via 'Lys-6'-linked ubiquitin chains by RNF8, promoting NBN recruitment to DNA double-strand breaks (DSBs). Ubiquitinated at Lys-687 via 'Lys-63'-linked ubiquitin chains by PELI1: ubiquitination takes place following PELI1 phosphorylation and promotes ATM activation and DNA repair. Ubiquitinated at Lys-732 via 'Lys-63'-linked ubiquitin chains by the SCF(SKP2) complex: ubiquitination takes place following SKP2 phosphorylation and promotes ATM activation and DNA repair. As to expression, present at approximately equal levels in the heart at fetal day 17, at relatively constant levels at postnatal days 10, 17 and 21 and at slightly lower levels in the adult heart. Barely detectable in the brain. Not detected in kidney, very low levels in liver and skeletal muscle and moderate levels in heart, lung and brain (at protein level).

The protein resides in the nucleus. It localises to the chromosome. It is found in the PML body. The protein localises to the telomere. Its function is as follows. Component of the MRN complex, which plays a central role in double-strand break (DSB) repair, DNA recombination, maintenance of telomere integrity and meiosis. The MRN complex is involved in the repair of DNA double-strand breaks (DSBs) via homologous recombination (HR), an error-free mechanism which primarily occurs during S and G2 phases. The complex (1) mediates the end resection of damaged DNA, which generates proper single-stranded DNA, a key initial steps in HR, and is (2) required for the recruitment of other repair factors and efficient activation of ATM and ATR upon DNA damage. The MRN complex possesses single-strand endonuclease activity and double-strand-specific 3'-5' exonuclease activity, which are provided by MRE11, to initiate end resection, which is required for single-strand invasion and recombination. Within the MRN complex, NBN acts as a protein-protein adapter, which specifically recognizes and binds phosphorylated proteins, promoting their recruitment to DNA damage sites. Recruits MRE11 and RAD50 components of the MRN complex to DSBs in response to DNA damage. Promotes the recruitment of PI3/PI4-kinase family members ATM, ATR, and probably DNA-PKcs to the DNA damage sites, activating their functions. Mediates the recruitment of phosphorylated RBBP8/CtIP to DSBs, leading to cooperation between the MRN complex and RBBP8/CtIP to initiate end resection. RBBP8/CtIP specifically promotes the endonuclease activity of the MRN complex to clear DNA ends containing protein adducts. The MRN complex is also required for the processing of R-loops. NBN also functions in telomere length maintenance via its interaction with TERF2: interaction with TERF2 during G1 phase preventing recruitment of DCLRE1B/Apollo to telomeres. NBN also promotes DNA repair choice at dysfunctional telomeres: NBN phosphorylation by CK2 promotes non-homologous end joining repair at telomeres, while unphosphorylated NBN promotes microhomology-mediated end-joining (MMEJ) repair. Enhances AKT1 phosphorylation possibly by association with the mTORC2 complex. The protein is Nibrin (Nbn) of Rattus norvegicus (Rat).